Consider the following 63-residue polypeptide: U7-theraphotoxin-Cg1a (63 aa).

An N-terminal signal peptide occupies residues 1–21; it reads MKTSILFVIFGLALLFALSVA. Residues 22-31 constitute a propeptide that is removed on maturation; sequence IEMEEEETDR. 3 disulfides stabilise this stretch: C33/C47, C40/C52, and C46/C59.

In terms of tissue distribution, expressed by the venom gland.

The protein localises to the secreted. In terms of biological role, inhibits preferentially tetrodotoxin-insensitive sodium currents (Nav) on rat cardiac myocytes (IC(50) is 0.26 uM) and has weaker inhibition activity toward tetrodotoxin-sensitive sodium currents on rat dorsal root ganglion (DRG) sensory neurons (IC(50) is 0.83 uM) and on cockroach dorsal unpaired median (DUM) neurons (IC(50) is 1.19 uM). Has no significant effect on potassium currents on DRG neurons. The sequence is that of U7-theraphotoxin-Cg1a from Chilobrachys guangxiensis (Chinese earth tiger tarantula).